We begin with the raw amino-acid sequence, 368 residues long: Cytoskeleton protein RodZ (368 aa).

Over 1 to 111 (MNTEASQDQT…LGKKHKKRDG (111 aa)) the chain is Cytoplasmic. In terms of domain architecture, HTH cro/C1-type spans 19–79 (LRQARESLGL…KLVHLPEDEL (61 aa)). The segment at residues 30–49 (QQTVAERLCLKVSTIRDIEE) is a DNA-binding region (H-T-H motif). The helical; Signal-anchor for type II membrane protein transmembrane segment at 112-132 (WLMSFTWLIVLVVLGLTGAWW) threads the bilayer. The Periplasmic segment spans residues 133 to 368 (WQNHQAQQAE…RVARLTVGVE (236 aa)). The tract at residues 151–243 (SAQLSQNGGQ…STEPVDTANT (93 aa)) is disordered. Low complexity predominate over residues 193–221 (STSAVTNSATTSSATTSSVPTTSSVPKTT). A compositionally biased stretch (polar residues) spans 229-243 (VPKTNSTEPVDTANT).

This sequence belongs to the RodZ family.

Its subcellular location is the cell inner membrane. Cytoskeletal protein that is involved in cell-shape control through regulation of the length of the long axis. The chain is Cytoskeleton protein RodZ from Yersinia pseudotuberculosis serotype O:3 (strain YPIII).